Here is a 630-residue protein sequence, read N- to C-terminus: DNA topoisomerase 4 subunit B (630 aa).

Residues Tyr-5, Asn-42, Asp-69, 110 to 116, and Lys-334 each bind ATP; that span reads GLHGVGI. Residues 412 to 525 enclose the Toprim domain; that stretch reads TELFLVEGDS…HGHVYVALPP (114 aa). Residues Glu-418, Asp-490, and Asp-492 each coordinate Mg(2+).

It belongs to the type II topoisomerase family. ParE type 1 subfamily. Heterotetramer composed of ParC and ParE. Mg(2+) serves as cofactor. The cofactor is Mn(2+). Requires Ca(2+) as cofactor.

The enzyme catalyses ATP-dependent breakage, passage and rejoining of double-stranded DNA.. Pyrrolopyrimidines inhibit both GyrB and its paralog in topoisomerase IV (parE). Functionally, topoisomerase IV is essential for chromosome segregation; it is the principal protein responsible for decatenating newly replicated chromosomes. It relaxes supercoiled DNA. MukB stimulates the relaxation activity of topoisomerase IV and also has a modest effect on decatenation. The protein is DNA topoisomerase 4 subunit B of Escherichia coli (strain K12).